The sequence spans 194 residues: uncharacterized protein (194 aa).

This is an uncharacterized protein from Tomato ringspot virus (isolate raspberry) (ToRSV).